An 86-amino-acid polypeptide reads, in one-letter code: Large ribosomal subunit protein bL27 (86 aa).

The disordered stretch occupies residues 1–24 (MATKKAGGSSRNGRDSAGRRLGVK).

It belongs to the bacterial ribosomal protein bL27 family.

This is Large ribosomal subunit protein bL27 from Rickettsia conorii (strain ATCC VR-613 / Malish 7).